The sequence spans 85 residues: Large ribosomal subunit protein bL31B (85 aa).

The protein belongs to the bacterial ribosomal protein bL31 family. Type B subfamily. As to quaternary structure, part of the 50S ribosomal subunit.

This Bifidobacterium longum subsp. infantis (strain ATCC 15697 / DSM 20088 / JCM 1222 / NCTC 11817 / S12) protein is Large ribosomal subunit protein bL31B.